Here is a 121-residue protein sequence, read N- to C-terminus: MRVKGPSSKKHKKKILKLAKGYYGAKHRSFRRAKEQVLRSLQYEYRDRRLRKREFRRLWIQRINAAARLNGLSYSQFMHGLKLAGIDLNRKMLADIAVADPETFTKLAEKAKEAISQKSAA.

The protein belongs to the bacterial ribosomal protein bL20 family.

Its function is as follows. Binds directly to 23S ribosomal RNA and is necessary for the in vitro assembly process of the 50S ribosomal subunit. It is not involved in the protein synthesizing functions of that subunit. The sequence is that of Large ribosomal subunit protein bL20 from Persephonella marina (strain DSM 14350 / EX-H1).